Here is a 60-residue protein sequence, read N- to C-terminus: Large ribosomal subunit protein uL30 (60 aa).

Belongs to the universal ribosomal protein uL30 family. Part of the 50S ribosomal subunit.

This is Large ribosomal subunit protein uL30 from Clavibacter michiganensis subsp. michiganensis (strain NCPPB 382).